The primary structure comprises 203 residues: Thymidylate kinase (203 aa).

Gly10 to Ser17 is an ATP binding site.

This sequence belongs to the thymidylate kinase family.

It carries out the reaction dTMP + ATP = dTDP + ADP. Its function is as follows. Phosphorylation of dTMP to form dTDP in both de novo and salvage pathways of dTTP synthesis. The sequence is that of Thymidylate kinase from Cupriavidus pinatubonensis (strain JMP 134 / LMG 1197) (Cupriavidus necator (strain JMP 134)).